Reading from the N-terminus, the 362-residue chain is Adenosine deaminase (362 aa).

Zn(2+)-binding residues include histidine 19 and histidine 21. Substrate is bound by residues histidine 21, aspartate 23, and glycine 181. Histidine 208 serves as a coordination point for Zn(2+). Glutamate 211 functions as the Proton donor in the catalytic mechanism. Aspartate 300 serves as a coordination point for Zn(2+).

The protein belongs to the metallo-dependent hydrolases superfamily. Adenosine and AMP deaminases family. Adenosine deaminase subfamily. The cofactor is Zn(2+).

It catalyses the reaction adenosine + H2O + H(+) = inosine + NH4(+). It carries out the reaction 2'-deoxyadenosine + H2O + H(+) = 2'-deoxyinosine + NH4(+). In terms of biological role, catalyzes the hydrolytic deamination of adenosine and 2-deoxyadenosine. This is Adenosine deaminase from Mycobacterium ulcerans (strain Agy99).